A 127-amino-acid chain; its full sequence is Glycine cleavage system H protein (127 aa).

Positions 22–104 (KVRIGITDFA…YEKAWMIVVE (83 aa)) constitute a Lipoyl-binding domain. At K63 the chain carries N6-lipoyllysine.

Belongs to the GcvH family. In terms of assembly, the glycine cleavage system is composed of four proteins: P, T, L and H. (R)-lipoate is required as a cofactor.

The glycine cleavage system catalyzes the degradation of glycine. The H protein shuttles the methylamine group of glycine from the P protein to the T protein. In terms of biological role, is also involved in protein lipoylation via its role as an octanoyl/lipoyl carrier protein intermediate. The sequence is that of Glycine cleavage system H protein from Geobacillus sp. (strain WCH70).